The sequence spans 400 residues: Nicotinate phosphoribosyltransferase (400 aa).

His-220 carries the phosphohistidine; by autocatalysis modification.

This sequence belongs to the NAPRTase family. Post-translationally, transiently phosphorylated on a His residue during the reaction cycle. Phosphorylation strongly increases the affinity for substrates and increases the rate of nicotinate D-ribonucleotide production. Dephosphorylation regenerates the low-affinity form of the enzyme, leading to product release.

The enzyme catalyses nicotinate + 5-phospho-alpha-D-ribose 1-diphosphate + ATP + H2O = nicotinate beta-D-ribonucleotide + ADP + phosphate + diphosphate. The protein operates within cofactor biosynthesis; NAD(+) biosynthesis; nicotinate D-ribonucleotide from nicotinate: step 1/1. Catalyzes the synthesis of beta-nicotinate D-ribonucleotide from nicotinate and 5-phospho-D-ribose 1-phosphate at the expense of ATP. The protein is Nicotinate phosphoribosyltransferase of Citrobacter koseri (strain ATCC BAA-895 / CDC 4225-83 / SGSC4696).